The following is a 263-amino-acid chain: MAVGKNKGLSKGGKKGVKKKIVDPFTRKDWYDVKAPSMFSKRQVGTTLVNRTQGTKIASEGLKGRVFEVSLADLQADTDAERSFRKFRLIAEDVQGRNVLCNFHGMDLTTDKLRWMVKKWQTLIEANIDVKTTDGYVLRVFCIGFTNKDSLSQRKTCYAQHTQVRAIRKKMCEIITRDVTNSELREVVNKLIPDSIAKDIEKACHGIYPLRDVCIRKVKVLKRPRFEISKLMELHGEGGGGKREAGDKSERPEGYEPPVQESV.

Over residues 235-254 (HGEGGGGKREAGDKSERPEG) the composition is skewed to basic and acidic residues. Residues 235–263 (HGEGGGGKREAGDKSERPEGYEPPVQESV) form a disordered region.

Belongs to the eukaryotic ribosomal protein eS1 family. In terms of assembly, component of the small ribosomal subunit. Mature ribosomes consist of a small (40S) and a large (60S) subunit. The 40S subunit contains about 33 different proteins and 1 molecule of RNA (18S). The 60S subunit contains about 49 different proteins and 3 molecules of RNA (28S, 5.8S and 5S).

Its subcellular location is the cytoplasm. The polypeptide is Small ribosomal subunit protein eS1 (Bombyx mandarina (Wild silk moth)).